Here is a 315-residue protein sequence, read N- to C-terminus: Calumenin-A (315 aa).

A signal peptide spans 1–19 (MEIRPLLMCFALCVVYATS). 6 consecutive EF-hand domains span residues 68–103 (ESKR…AQKK), 104–139 (YIYE…TYLD), 151–186 (HMMA…EEYD), 188–223 (MKDI…HEDE), 229–264 (WVAT…SDYD), and 265–300 (HAEA…FVGS). Positions 81, 83, 85, 92, 117, 119, 121, 123, and 128 each coordinate Ca(2+). Asparagine 131 is a glycosylation site (N-linked (GlcNAc...) asparagine). Residues aspartate 164, asparagine 166, aspartate 168, glutamate 175, aspartate 201, asparagine 203, aspartate 205, glutamate 212, aspartate 242, asparagine 244, aspartate 246, lysine 248, glutamate 253, aspartate 278, asparagine 280, aspartate 282, lysine 284, and glutamate 289 each coordinate Ca(2+). A Prevents secretion from ER motif is present at residues 312 to 315 (HDEF).

This sequence belongs to the CREC family. In terms of assembly, interacts with ggcx.

It is found in the endoplasmic reticulum membrane. It localises to the golgi apparatus. Its subcellular location is the secreted. The protein localises to the melanosome. The protein resides in the sarcoplasmic reticulum lumen. Involved in regulation of vitamin K-dependent carboxylation of multiple N-terminal glutamate residues. Seems to inhibit gamma-carboxylase ggcx. Binds 7 calcium ions with a low affinity. This chain is Calumenin-A (calua), found in Salmo salar (Atlantic salmon).